A 236-amino-acid chain; its full sequence is tRNA1(Val) (adenine(37)-N6)-methyltransferase (236 aa).

It belongs to the methyltransferase superfamily. tRNA (adenine-N(6)-)-methyltransferase family.

The protein resides in the cytoplasm. It catalyses the reaction adenosine(37) in tRNA1(Val) + S-adenosyl-L-methionine = N(6)-methyladenosine(37) in tRNA1(Val) + S-adenosyl-L-homocysteine + H(+). Specifically methylates the adenine in position 37 of tRNA(1)(Val) (anticodon cmo5UAC). This is tRNA1(Val) (adenine(37)-N6)-methyltransferase from Aeromonas hydrophila subsp. hydrophila (strain ATCC 7966 / DSM 30187 / BCRC 13018 / CCUG 14551 / JCM 1027 / KCTC 2358 / NCIMB 9240 / NCTC 8049).